We begin with the raw amino-acid sequence, 1566 residues long: Arginine-glutamic acid dipeptide repeats protein (1566 aa).

The segment covering 1-36 (MTADKDKDKDKEKDRDRDRDREREKRDKARESENSR) has biased composition (basic and acidic residues). The tract at residues 1 to 90 (MTADKDKDKD…KKKSRYERTD (90 aa)) is disordered. Ser-53 and Ser-56 each carry phosphoserine. Positions 74–85 (KNKKKPPKKKSR) are enriched in basic residues. The BAH domain occupies 103-283 (VVYRPGDCVY…PETRRLNSTQ (181 aa)). Phosphothreonine is present on Thr-120. Residues Ser-142 and Ser-304 each carry the phosphoserine modification. In terms of domain architecture, ELM2 spans 284–387 (GEIRVGPSHQ…KALQRLVKKP (104 aa)). Residues 391–443 (LIEKCWTEDEVKRFVKGLRQYGKNFFRIRKELLPNKETGELITFYYYWKKTPE) form the SANT domain. The disordered stretch occupies residues 464–495 (TRTASTPVNTPSRPPSSEFLDLSSASEDDFDS). Positions 465-474 (RTASTPVNTP) are enriched in polar residues. The span at 479–488 (SSEFLDLSSA) shows a compositional bias: low complexity. The segment at 507 to 532 (CRHCFTTTSKDWHHGGRENILLCTDC) adopts a GATA-type zinc-finger fold. The disordered stretch occupies residues 542 to 1133 (LPPIEKPVDP…PSHASQSARF (592 aa)). Lys-560 participates in a covalent cross-link: Glycyl lysine isopeptide (Lys-Gly) (interchain with G-Cter in SUMO2). 3 positions are modified to phosphoserine: Ser-594, Ser-600, and Ser-613. The span at 609–623 (SGRNSPSAASTSSND) shows a compositional bias: low complexity. Residues 624–640 (SKAETVKKSAKKVKEEA) are compositionally biased toward basic and acidic residues. A Glycyl lysine isopeptide (Lys-Gly) (interchain with G-Cter in SUMO2) cross-link involves residue Lys-637. Phosphoserine occurs at positions 642, 656, 675, and 679. Over residues 652–673 (EKVASDTEEADRTSSKKTKTQE) the composition is skewed to basic and acidic residues. Basic and acidic residues predominate over residues 688-708 (SDSRSVNDEGSSDPKDIDQDN). The span at 709–720 (RSTSPSIPSPQD) shows a compositional bias: polar residues. Low complexity predominate over residues 726 to 751 (DSSAQQQMLQAQPPALQAPTGVTPAP). Over residues 752-767 (SSAPPGTPQLPTPGPT) the composition is skewed to pro residues. Residues 778–796 (SPTASQAPNQPQAPTAPVP) show a composition bias toward low complexity. Over residues 809–827 (QRPPSPHPPPHPSPHPPLQ) the composition is skewed to pro residues. Over residues 829–840 (LTGSAGQPSAPS) the composition is skewed to polar residues. Low complexity-rich tracts occupy residues 843–865 (QPPLHGQGPPGPHSLQAGPLLQH) and 897–913 (SLQLPASQSALQSQQPP). The segment covering 914–940 (REQPLPPAPLAMPHIKPPPTTPIPQLP) has biased composition (pro residues). Residues 970–980 (KPLSSLSTHHP) are compositionally biased toward low complexity. A compositionally biased stretch (pro residues) spans 1030–1052 (PQPPFAQHPFVPGGPPPITPPTC). The span at 1053-1085 (PSTSTPPAGPGTSAQPPCSGAAASGGSIAGGSS) shows a compositional bias: low complexity. Phosphoserine is present on residues Ser-1106, Ser-1113, and Ser-1115. Positions 1106–1117 (SPPPPPRSPSPE) are enriched in pro residues. Thr-1119 carries the phosphothreonine modification. Residues 1156–1211 (GSKLAKKREEAIEKAKREAEQKAREEREREKEKEKEREREREREREAERAAKASSS) are a coiled coil. Lys-1158 bears the N6-acetyllysine mark. Residues 1162-1206 (KREEAIEKAKREAEQKAREEREREKEKEKEREREREREREAERAA) are compositionally biased toward basic and acidic residues. Residues 1162 to 1246 (KREEAIEKAK…TTIAAVPPYI (85 aa)) are disordered. Tyr-1259 carries the phosphotyrosine modification. Ser-1266 carries the post-translational modification Phosphoserine.

As to quaternary structure, interacts with HDAC1. Interacts with ATN1. Interaction with ATN1 is improved when the poly-Gln region of ATN1 is extended. Interacts with FAT1. Widely expressed. Expressed in tumor cell lines.

The protein resides in the nucleus. In terms of biological role, plays a role as a transcriptional repressor during development. May play a role in the control of cell survival. Overexpression of RERE recruits BAX to the nucleus particularly to POD and triggers caspase-3 activation, leading to cell death. The protein is Arginine-glutamic acid dipeptide repeats protein (RERE) of Homo sapiens (Human).